A 160-amino-acid polypeptide reads, in one-letter code: Probable nucleoside diphosphate kinase DDB_G0292928 (160 aa).

Positions 12, 61, 103, 109, 122, and 132 each coordinate ATP. Residue histidine 135 is the Pros-phosphohistidine intermediate of the active site.

Belongs to the NDK family. Mg(2+) is required as a cofactor.

The enzyme catalyses a 2'-deoxyribonucleoside 5'-diphosphate + ATP = a 2'-deoxyribonucleoside 5'-triphosphate + ADP. It carries out the reaction a ribonucleoside 5'-diphosphate + ATP = a ribonucleoside 5'-triphosphate + ADP. The sequence is that of Probable nucleoside diphosphate kinase DDB_G0292928 from Dictyostelium discoideum (Social amoeba).